The primary structure comprises 54 residues: Rubredoxin (54 aa).

Residues 1–54 (MKKYVCVVCGYIYDPAEGDPDNGVNPGTSFEDIPDDWVCPLCGVGKDQFEPSEE) form the Rubredoxin-like domain. 4 residues coordinate Fe cation: Cys-6, Cys-9, Cys-39, and Cys-42.

The protein belongs to the rubredoxin family. It depends on Fe(3+) as a cofactor.

In terms of biological role, rubredoxin is a small nonheme, iron protein lacking acid-labile sulfide. Its single Fe, chelated to 4 Cys, functions as an electron acceptor and may also stabilize the conformation of the molecule. Functions as an intermediate component in the electron transfer chain: NADH-&gt;NROR-&gt;Rd-&gt;FprA1/2 in which Rd serves as the proximal electron donor to the FDPs that exhibit H(2)O-forming NADH oxidase activity. Also functions as the proximal electron donor to the Dfx and revRbr proteins that display superoxide reductase (SOR) and NADH peroxidase activity, respectively. Therefore, is a key electron carrier in an efficient multienzyme complex that can scavenge O(2) and reactive oxygen species (ROS), and thus plays an important role in the oxidative stress defense system in C.acetobutylicum, an obligate anaerobic bacterium. In Clostridium acetobutylicum (strain ATCC 824 / DSM 792 / JCM 1419 / IAM 19013 / LMG 5710 / NBRC 13948 / NRRL B-527 / VKM B-1787 / 2291 / W), this protein is Rubredoxin (rd).